Reading from the N-terminus, the 314-residue chain is Methionyl-tRNA formyltransferase (314 aa).

111–114 (SLLP) contacts (6S)-5,6,7,8-tetrahydrofolate.

It belongs to the Fmt family.

The catalysed reaction is L-methionyl-tRNA(fMet) + (6R)-10-formyltetrahydrofolate = N-formyl-L-methionyl-tRNA(fMet) + (6S)-5,6,7,8-tetrahydrofolate + H(+). Attaches a formyl group to the free amino group of methionyl-tRNA(fMet). The formyl group appears to play a dual role in the initiator identity of N-formylmethionyl-tRNA by promoting its recognition by IF2 and preventing the misappropriation of this tRNA by the elongation apparatus. The protein is Methionyl-tRNA formyltransferase of Chlorobium chlorochromatii (strain CaD3).